The chain runs to 260 residues: DNA repair protein RecO (260 aa).

This sequence belongs to the RecO family.

In terms of biological role, involved in DNA repair and RecF pathway recombination. The sequence is that of DNA repair protein RecO from Streptococcus suis (strain 98HAH33).